The following is a 616-amino-acid chain: Methionine--tRNA ligase, chloroplastic/mitochondrial (616 aa).

The short motif at 78 to 88 (YYVNAPPHMGS) is the 'HIGH' region element. A 'KMSKS' region motif is present at residues 366-370 (KMGKS). K369 lines the ATP pocket. Residues 582–593 (LNPEKEEDEKKP) are compositionally biased toward basic and acidic residues. The interval 582-602 (LNPEKEEDEKKPKVGKKTGKA) is disordered.

The protein belongs to the class-I aminoacyl-tRNA synthetase family.

It localises to the plastid. The protein resides in the chloroplast. Its subcellular location is the mitochondrion. It carries out the reaction tRNA(Met) + L-methionine + ATP = L-methionyl-tRNA(Met) + AMP + diphosphate. This is Methionine--tRNA ligase, chloroplastic/mitochondrial from Arabidopsis thaliana (Mouse-ear cress).